Here is a 359-residue protein sequence, read N- to C-terminus: Nicotinate-nucleotide--dimethylbenzimidazole phosphoribosyltransferase (359 aa).

Catalysis depends on E318, which acts as the Proton acceptor.

Belongs to the CobT family. Homodimer.

It carries out the reaction 5,6-dimethylbenzimidazole + nicotinate beta-D-ribonucleotide = alpha-ribazole 5'-phosphate + nicotinate + H(+). It functions in the pathway nucleoside biosynthesis; alpha-ribazole biosynthesis; alpha-ribazole from 5,6-dimethylbenzimidazole: step 1/2. Catalyzes the synthesis of alpha-ribazole-5'-phosphate from nicotinate mononucleotide (NAMN) and 5,6-dimethylbenzimidazole (DMB). The polypeptide is Nicotinate-nucleotide--dimethylbenzimidazole phosphoribosyltransferase (Escherichia coli (strain UTI89 / UPEC)).